The chain runs to 932 residues: Transcriptional regulatory protein DagR (932 aa).

The Sigma-54 factor interaction domain maps to 111–343 (LIGYDRSLRD…LKSDIQFLCA (233 aa)). ATP contacts are provided by residues 141-148 (GPSGVGKT) and 210-219 (ADGGYLLLDE). Residues 462 to 567 (RYGDQIEERV…KECRHYRQRI (106 aa)) enclose the PRD 1 domain. Position 497 is a phosphohistidine (His497). One can recognise a PTS EIIA type-4 domain in the interval 572-708 (DCGVILIAHG…PQQENGGKVL (137 aa)). The Tele-phosphohistidine intermediate role is filled by His580. The PRD 2 domain occupies 835-932 (LNPQRILKEM…YFYIYELLYS (98 aa)). His870 carries the post-translational modification Phosphohistidine.

Functionally, involved in the regulation of the catabolism of D-glucosaminate. This chain is Transcriptional regulatory protein DagR (dgaR), found in Salmonella typhimurium (strain 14028s / SGSC 2262).